The sequence spans 122 residues: Large ribosomal subunit protein bL12 (122 aa).

It belongs to the bacterial ribosomal protein bL12 family. As to quaternary structure, homodimer. Part of the ribosomal stalk of the 50S ribosomal subunit. Forms a multimeric L10(L12)X complex, where L10 forms an elongated spine to which 2 to 4 L12 dimers bind in a sequential fashion. Binds GTP-bound translation factors.

Its function is as follows. Forms part of the ribosomal stalk which helps the ribosome interact with GTP-bound translation factors. Is thus essential for accurate translation. The chain is Large ribosomal subunit protein bL12 from Acinetobacter baumannii (strain AB0057).